The following is a 188-amino-acid chain: Killer cell lectin-like receptor subfamily G member 1 (188 aa).

The Cytoplasmic segment spans residues 1–33 (MADSSIYSTLELPEAPQVQDESRWKLKAVLHRP). The short motif at 5 to 10 (SIYSTL) is the ITIM motif element. The chain crosses the membrane as a helical; Signal-anchor for type II membrane protein span at residues 34–56 (HLSRFAMVALGLLTVILMSLLMY). The Extracellular segment spans residues 57–188 (QRILCCGSKD…LQWICKKVLY (132 aa)). C75 and C86 form a disulfide bridge. Residues N82 and N97 are each glycosylated (N-linked (GlcNAc...) asparagine). Residues 82–184 (NGSHCYYFSM…CEVALQWICK (103 aa)) enclose the C-type lectin domain. Cystine bridges form between C103/C183 and C162/C175.

Forms a monomer and homodimer; disulfide-linked. Interacts (via ITIM motif) with PTPN11 and INPP5D. In terms of processing, phosphorylated in response to monoclonal antibody G63 binding and antigenic stimulation. As to expression, expressed specifically on natural killer (NK) cells and activated CD8 T-cells. Not detected in spleen, thymus, lymph node, testis, brain or kidney. Not detected on mast cell lines, bone marrow-derived mast cells, or peritoneal mast cells.

The protein resides in the cell membrane. Functionally, plays an inhibitory role on natural killer (NK) cells and T-cell functions upon binding to their non-MHC ligands. May mediate missing self recognition by binding to a highly conserved site on classical cadherins, enabling it to monitor expression of E-cadherin/CDH1, N-cadherin/CDH2 and R-cadherin/CDH4 on target cells. In Mus musculus (Mouse), this protein is Killer cell lectin-like receptor subfamily G member 1 (Klrg1).